The chain runs to 681 residues: DNA-directed RNA polymerase subunit beta' (681 aa).

Zn(2+) contacts are provided by C69, C71, C87, and C90. Residues D489, D491, and D493 each coordinate Mg(2+).

This sequence belongs to the RNA polymerase beta' chain family. RpoC1 subfamily. As to quaternary structure, in plastids the minimal PEP RNA polymerase catalytic core is composed of four subunits: alpha, beta, beta', and beta''. When a (nuclear-encoded) sigma factor is associated with the core the holoenzyme is formed, which can initiate transcription. Mg(2+) is required as a cofactor. The cofactor is Zn(2+).

Its subcellular location is the plastid. The protein localises to the chloroplast. It catalyses the reaction RNA(n) + a ribonucleoside 5'-triphosphate = RNA(n+1) + diphosphate. In terms of biological role, DNA-dependent RNA polymerase catalyzes the transcription of DNA into RNA using the four ribonucleoside triphosphates as substrates. This is DNA-directed RNA polymerase subunit beta' from Cycas taitungensis (Prince sago).